The primary structure comprises 140 residues: Heavy metal-associated isoprenylated plant protein 31 (140 aa).

The region spanning M3–E67 is the HMA domain. A metal cation-binding residues include C14 and C17. Cysteine methyl ester is present on C137. C137 is lipidated: S-farnesyl cysteine. A propeptide spans T138–M140 (removed in mature form).

It belongs to the HIPP family.

Functionally, heavy-metal-binding protein. This Arabidopsis thaliana (Mouse-ear cress) protein is Heavy metal-associated isoprenylated plant protein 31.